The primary structure comprises 322 residues: Acetylglutamate kinase (322 aa).

Residues 89–90 (GG), R111, and N217 each bind substrate.

It belongs to the acetylglutamate kinase family. ArgB subfamily.

The protein resides in the cytoplasm. It catalyses the reaction N-acetyl-L-glutamate + ATP = N-acetyl-L-glutamyl 5-phosphate + ADP. Its pathway is amino-acid biosynthesis; L-arginine biosynthesis; N(2)-acetyl-L-ornithine from L-glutamate: step 2/4. Functionally, catalyzes the ATP-dependent phosphorylation of N-acetyl-L-glutamate. The chain is Acetylglutamate kinase from Ehrlichia ruminantium (strain Welgevonden).